A 123-amino-acid chain; its full sequence is Ribonuclease P protein component (123 aa).

This sequence belongs to the RnpA family. Consists of a catalytic RNA component (M1 or rnpB) and a protein subunit.

It carries out the reaction Endonucleolytic cleavage of RNA, removing 5'-extranucleotides from tRNA precursor.. Functionally, RNaseP catalyzes the removal of the 5'-leader sequence from pre-tRNA to produce the mature 5'-terminus. It can also cleave other RNA substrates such as 4.5S RNA. The protein component plays an auxiliary but essential role in vivo by binding to the 5'-leader sequence and broadening the substrate specificity of the ribozyme. In Herpetosiphon aurantiacus (strain ATCC 23779 / DSM 785 / 114-95), this protein is Ribonuclease P protein component.